Consider the following 191-residue polypeptide: Rho-related GTP-binding protein RhoH (191 aa).

Position 11–18 (11–18) interacts with GTP; sequence GDSAVGKT. The Effector region signature appears at 33-41; the sequence is YKPTVYENT. 58–62 lines the GTP pocket; it reads DTAGN. The segment at 73-86 is interaction with ZAP70; that stretch reads YQQADVVLMCYSVA. 116–119 is a GTP binding site; the sequence is TQTD. The residue at position 188 (C188) is a Cysteine methyl ester. A lipid anchor (S-geranylgeranyl cysteine) is attached at C188. Residues 189–191 constitute a propeptide, removed in mature form; the sequence is KIF.

This sequence belongs to the small GTPase superfamily. Rho family. Interacts with GDI1 and GDI2. Interacts with ZAP70 (via SH2 domains) and the interaction is enhanced by its phosphorylation by LCK. Interacts with SYK and the interaction is enhanced by its phosphorylation by FYN. In terms of processing, phosphorylated on tyrosine by LCK. Phosphorylated by FYN. Phosphorylation enhances the interactions with ZAP70 and SYK and is critical for its function in thymocyte development. Expression is widespread in hematopoietic cells, including in bone marrow progenitor cells and in differentiated myeloid as well as lymphoid cells. Expressed at high levels in the thymus and mast cells, found in spleen and low-density bone marrow (LDBM) cells and is detected at a low level in neutrophils. In the thymus it is detected in thymocytes of the thymic cortex but not in non-lymphoid cells of fibrovascular and fibroadipose tissues. Expressed in T-cells, B-cells and mast cells.

The protein localises to the cytoplasm. The protein resides in the cell membrane. Its function is as follows. Binds GTP but lacks intrinsic GTPase activity and is resistant to Rho-specific GTPase-activating proteins. Inhibits the activation of NF-kappa-B by TNF and IKKB and the activation of CRK/p38 by TNF. Inhibits activities of RAC1, RHOA and CDC42. Negatively regulates leukotriene production in neutrophils. Negative regulator of hematopoietic progenitor cell proliferation, survival and migration. Critical regulator of thymocyte development and T-cell antigen receptor (TCR) signaling by mediating recruitment and activation of ZAP70. Required for phosphorylation of CD3Z, membrane translocation of ZAP70 and subsequent activation of the ZAP70-mediated pathways. Essential for efficient beta-selection and positive selection by promoting the ZAP70-dependent phosphorylation of the LAT signalosome during pre-TCR and TCR signaling. Crucial for thymocyte maturation during DN3 to DN4 transition and during positive selection. Plays critical roles in mast cell function by facilitating phosphorylation of SYK in Fc epsilon RI-mediated signal transduction. Essential for the phosphorylation of LAT, LCP2, PLCG1 and PLCG2 and for Ca(2+) mobilization in mast cells. This chain is Rho-related GTP-binding protein RhoH (Rhoh), found in Mus musculus (Mouse).